The sequence spans 362 residues: MSGPIPNPGILDIAPYVGGEHSAPGVTRLLRLASNEGALGPSPRAVEAFRAVGPEIHRYPDGGSTRLREAIGHRFGLDPARVLCFNGSDEVLHLLAQAYAGPGGEVLYSRHGFLVYPIAARAAGATPVAAPERNLTTDVDALLARVSERTRIVYVANPNNPTGSYLPADALARLHAGLPPHVLLVIDAAYAEYVTANDYADGTALVARFDNVVMTRTFSKLFGLGGMRLGWAYCPPAVADALHRVRSPFNVSVAAQAAGVAALEDLEFQERSRALNEQSRTAFTGRVRALGLVVHPSVCNFVLVDFAATGRPAEEARQFLKARGILVRQMGAYGLPDCLRITMGLPAEMEEVADALGDWLKG.

K220 carries the post-translational modification N6-(pyridoxal phosphate)lysine.

This sequence belongs to the class-II pyridoxal-phosphate-dependent aminotransferase family. Histidinol-phosphate aminotransferase subfamily. Homodimer. The cofactor is pyridoxal 5'-phosphate.

The catalysed reaction is L-histidinol phosphate + 2-oxoglutarate = 3-(imidazol-4-yl)-2-oxopropyl phosphate + L-glutamate. The protein operates within amino-acid biosynthesis; L-histidine biosynthesis; L-histidine from 5-phospho-alpha-D-ribose 1-diphosphate: step 7/9. This chain is Histidinol-phosphate aminotransferase, found in Rhodospirillum centenum (strain ATCC 51521 / SW).